Reading from the N-terminus, the 274-residue chain is Diaminopimelate epimerase (274 aa).

3 residues coordinate substrate: asparagine 11, glutamine 44, and asparagine 64. The active-site Proton donor is cysteine 73. Substrate is bound by residues 74 to 75, asparagine 157, asparagine 190, and 208 to 209; these read GN and ER. Residue cysteine 217 is the Proton acceptor of the active site. 218–219 contacts substrate; that stretch reads GS.

The protein belongs to the diaminopimelate epimerase family. In terms of assembly, homodimer.

It localises to the cytoplasm. The catalysed reaction is (2S,6S)-2,6-diaminopimelate = meso-2,6-diaminopimelate. It participates in amino-acid biosynthesis; L-lysine biosynthesis via DAP pathway; DL-2,6-diaminopimelate from LL-2,6-diaminopimelate: step 1/1. In terms of biological role, catalyzes the stereoinversion of LL-2,6-diaminopimelate (L,L-DAP) to meso-diaminopimelate (meso-DAP), a precursor of L-lysine and an essential component of the bacterial peptidoglycan. This chain is Diaminopimelate epimerase, found in Cronobacter sakazakii (strain ATCC BAA-894) (Enterobacter sakazakii).